The sequence spans 129 residues: Cytochrome c oxidase subunit 13, mitochondrial (129 aa).

The transit peptide at 1-9 directs the protein to the mitochondrion; the sequence is MFRQCAKRY. Residues 10-43 are Mitochondrial matrix-facing; sequence ASSLPPNALKPAFGPPDKVAAQKFKESLMATEKH. The helical transmembrane segment at 44–71 threads the bilayer; sequence AKDTSNMWVKISVWVALPAIALTAVNTY. The Mitochondrial intermembrane segment spans residues 72 to 129; the sequence is FVEKEHAEHREHLKHVPDSEWPRDYEFMNIRSKPFFWGDGDKTLFWNPVVNRHIEHDD.

This sequence belongs to the cytochrome c oxidase subunit 6A family. Component of the cytochrome c oxidase (complex IV, CIV), a multisubunit enzyme composed of 12 subunits. The complex is composed of a catalytic core of 3 subunits COX1, COX2 and COX3, encoded in the mitochondrial DNA, and 9 supernumerary subunits COX4, COX5A (or COX5B), COX6, COX7, COX8, COX9, COX12, COX13 and COX26, which are encoded in the nuclear genome. The complex exists as a monomer or a dimer and forms supercomplexes (SCs) in the inner mitochondrial membrane with a dimer of ubiquinol-cytochrome c oxidoreductase (cytochrome b-c1 complex, complex III, CIII), resulting in 2 different assemblies (supercomplexes III(2)IV and III(2)IV(2)). COX13 interacts with COX1 and COX3 on the intermembrane space (IMS) and COX4 on the matrix side.

The protein localises to the mitochondrion inner membrane. The protein operates within energy metabolism; oxidative phosphorylation. Its function is as follows. Component of the cytochrome c oxidase, the last enzyme in the mitochondrial electron transport chain which drives oxidative phosphorylation. The respiratory chain contains 3 multisubunit complexes succinate dehydrogenase (complex II, CII), ubiquinol-cytochrome c oxidoreductase (cytochrome b-c1 complex, complex III, CIII) and cytochrome c oxidase (complex IV, CIV), that cooperate to transfer electrons derived from NADH and succinate to molecular oxygen, creating an electrochemical gradient over the inner membrane that drives transmembrane transport and the ATP synthase. Cytochrome c oxidase is the component of the respiratory chain that catalyzes the reduction of oxygen to water. Electrons originating from reduced cytochrome c in the intermembrane space (IMS) are transferred via the dinuclear copper A center (CU(A)) of COX2 and heme A of COX1 to the active site in COX1, a binuclear center (BNC) formed by heme A3 and copper B (CU(B)). The BNC reduces molecular oxygen to 2 water molecules using 4 electrons from cytochrome c in the IMS and 4 protons from the mitochondrial matrix. The protein is Cytochrome c oxidase subunit 13, mitochondrial (COX13) of Saccharomyces cerevisiae (strain ATCC 204508 / S288c) (Baker's yeast).